A 490-amino-acid polypeptide reads, in one-letter code: Myocilin (490 aa).

The N-terminal stretch at M1–A18 is a signal peptide. Residue N43 is glycosylated (N-linked (GlcNAc...) asparagine). Residues Q52–G169 are a coiled coil. Residues R146–D157 show a composition bias toward basic and acidic residues. The tract at residues R146 to V188 is disordered. The Olfactomedin-like domain maps to G230 to E489. The cysteines at positions 231 and 419 are disulfide-linked. Ca(2+)-binding residues include D366, N414, A415, V463, and D464. Residues S488 to M490 carry the Microbody targeting signal motif.

In terms of assembly, homodimer (via N-terminus). Can also form higher oligomers. Interacts with OLFM3, FN1, NRCAM, GLDN and NFASC. Interacts (via N-terminus) with MYL2. Interacts with SFRP1, FRZB, FZD7, FZD10, FZD1 and WIF1; regulates Wnt signaling. Interacts with SNTA1; regulates muscle hypertrophy. Interacts with ERBB2 and ERBB3; activates ERBB2-ERBB3 signaling pathway. Interacts with SNCG; affects its secretion and its aggregation. Post-translationally, palmitoylated. In terms of processing, undergoes a calcium-dependent proteolytic cleavage at Arg-212 by CAPN2 in the endoplasmic reticulum. The result is the production of two fragments, one of 35 kDa containing the C-terminal olfactomedin-like domain, and another of 20 kDa containing the N-terminal leucine zipper-like domain. Glycosylated. In terms of tissue distribution, expressed in optic nerve head, ciliary body and retina.

Its subcellular location is the secreted. The protein resides in the golgi apparatus. The protein localises to the cytoplasmic vesicle. It localises to the extracellular space. It is found in the extracellular matrix. Its subcellular location is the extracellular exosome. The protein resides in the mitochondrion. The protein localises to the mitochondrion intermembrane space. It localises to the mitochondrion inner membrane. It is found in the mitochondrion outer membrane. Its subcellular location is the rough endoplasmic reticulum. The protein resides in the cell projection. The protein localises to the cilium. It localises to the endoplasmic reticulum. Its function is as follows. Secreted glycoprotein regulating the activation of different signaling pathways in adjacent cells to control different processes including cell adhesion, cell-matrix adhesion, cytoskeleton organization and cell migration. Promotes substrate adhesion, spreading and formation of focal contacts. Negatively regulates cell-matrix adhesion and stress fiber assembly through Rho protein signal transduction. Modulates the organization of actin cytoskeleton by stimulating the formation of stress fibers through interactions with components of Wnt signaling pathways. Promotes cell migration through activation of PTK2 and the downstream phosphatidylinositol 3-kinase signaling. Plays a role in bone formation and promotes osteoblast differentiation in a dose-dependent manner through mitogen-activated protein kinase signaling. Mediates myelination in the peripheral nervous system through ERBB2/ERBB3 signaling. Plays a role as a regulator of muscle hypertrophy through the components of dystrophin-associated protein complex. Involved in positive regulation of mitochondrial depolarization. Plays a role in neurite outgrowth. May participate in the obstruction of fluid outflow in the trabecular meshwork. The chain is Myocilin (MYOC) from Felis catus (Cat).